Consider the following 330-residue polypeptide: tRNA uridine(34) hydroxylase (330 aa).

The Rhodanese domain occupies 123-217 (SDPEVILVDT…YLEEVKQEES (95 aa)). Catalysis depends on cysteine 177, which acts as the Cysteine persulfide intermediate.

It belongs to the TrhO family.

The catalysed reaction is uridine(34) in tRNA + AH2 + O2 = 5-hydroxyuridine(34) in tRNA + A + H2O. Catalyzes oxygen-dependent 5-hydroxyuridine (ho5U) modification at position 34 in tRNAs. The protein is tRNA uridine(34) hydroxylase of Shewanella sp. (strain ANA-3).